Here is a 263-residue protein sequence, read N- to C-terminus: Caveolae-associated protein 3 (263 aa).

Positions 1–84 (MGESALEPGP…SNTLAQLLAK (84 aa)) are interaction with CAVIN1. Residues 20–78 (VHAVTVVTLLEKLATMLEALRERQGGLAERQGGLAGSVRRIQSGLGALSRSHDTTSNTL) form a leucine-zipper region. Serine 62 and serine 70 each carry phosphoserine. A Glycyl lysine isopeptide (Lys-Gly) (interchain with G-Cter in SUMO2) cross-link involves residue lysine 128. Positions 135-203 (ARAFQKAPEL…SSRKGSEAAQ (69 aa)) are interaction with CAV1. Residues 141-263 (APELLGPEDQ…RPVLQIESAA (123 aa)) are disordered. A compositionally biased stretch (acidic residues) spans 157-170 (QPEDEVGESSDEEP). 4 positions are modified to phosphoserine: serine 165, serine 166, serine 173, and serine 199. Low complexity predominate over residues 219 to 234 (EGPAEGQPAAQPAMEP).

Belongs to the CAVIN family. In terms of assembly, component of the CAVIN complex composed of CAVIN1, CAVIN2, CAVIN3 and CAVIN4. Interacts with PRKCD and with phosphatidylserine. Phosphatidylserine may form a bridge between PKC and PKC-binding partners and stabilize the binding. Interacts with PER2. Interacts with CAVIN1 and EPS15L1. Interacts (via leucine-zipper domain) with CAV1 in a cholesterol-sensitive manner. In terms of processing, in vitro, phosphorylated by PRKCD.

Its subcellular location is the cytoplasm. The protein localises to the membrane. It is found in the caveola. The protein resides in the cytosol. In terms of biological role, regulates the traffic and/or budding of caveolae. Plays a role in caveola formation in a tissue-specific manner. Required for the formation of caveolae in smooth muscle but not in the lung and heart endothelial cells. Regulates the equilibrium between cell surface-associated and cell surface-dissociated caveolae by promoting the rapid release of caveolae from the cell surface. Plays a role in the regulation of the circadian clock. Modulates the period length and phase of circadian gene expression and also regulates expression and interaction of the core clock components PER1/2 and CRY1/2. Seems to have an immune potentiation function, especially in the glioma. This Rattus norvegicus (Rat) protein is Caveolae-associated protein 3.